A 196-amino-acid polypeptide reads, in one-letter code: Serine/arginine-rich splicing factor RSZ22A (196 aa).

Residues 2 to 71 (SRVYVGNLDP…NGWRVEQSHN (70 aa)) enclose the RRM domain. Ser-48 is modified (phosphoserine). The span at 58–70 (VDGKNGWRVEQSH) shows a compositional bias: basic and acidic residues. The tract at residues 58 to 196 (VDGKNGWRVE…GLKDVRRSRS (139 aa)) is disordered. Over residues 72–87 (RGGGGGRGGGRGGGDG) the composition is skewed to gly residues. A compositionally biased stretch (basic and acidic residues) spans 88-100 (GRGRGGSDLKCYE). A CCHC-type zinc finger spans residues 96–113 (LKCYECGESGHFARECRS). The segment covering 119–135 (GRRRSRSRSRSPPRYRK) has biased composition (basic residues). Ser-136, Ser-144, Ser-146, Ser-151, Ser-159, Ser-170, and Ser-196 each carry phosphoserine. Residues 139-149 (YGGRRSYSPRA) are compositionally biased toward low complexity.

The protein belongs to the splicing factor SR family. RSZ subfamily. Component of the spliceosome. Post-translationally, extensively phosphorylated on serine residues in the RS domain.

It is found in the nucleus. In terms of biological role, probably involved in intron recognition and spliceosome assembly. The polypeptide is Serine/arginine-rich splicing factor RSZ22A (RSZ22A) (Arabidopsis thaliana (Mouse-ear cress)).